The following is a 467-amino-acid chain: Asparagine--tRNA ligase (467 aa).

The protein belongs to the class-II aminoacyl-tRNA synthetase family. Homodimer.

It localises to the cytoplasm. It carries out the reaction tRNA(Asn) + L-asparagine + ATP = L-asparaginyl-tRNA(Asn) + AMP + diphosphate + H(+). This is Asparagine--tRNA ligase from Baumannia cicadellinicola subsp. Homalodisca coagulata.